We begin with the raw amino-acid sequence, 874 residues long: DNA primase (874 aa).

Residues Cys786–Cys824 form a CHC2-type zinc finger. The span at Ala848–Leu857 shows a compositional bias: polar residues. The tract at residues Ala848–Asn874 is disordered.

This sequence belongs to the herpesviridae DNA primase family. As to quaternary structure, associates with the helicase and the primase-associated factor to form the helicase-primase factor.

It is found in the host nucleus. Functionally, essential component of the helicase/primase complex. Unwinds the DNA at the replication forks and generates single-stranded DNA for both leading and lagging strand synthesis. The primase initiates primer synthesis and thereby produces large amount of short RNA primers on the lagging strand that the polymerase elongates using dNTPs. In Epstein-Barr virus (strain B95-8) (HHV-4), this protein is DNA primase.